Here is a 415-residue protein sequence, read N- to C-terminus: Multidrug resistance protein MdtA (415 aa).

The N-terminal stretch at 1-21 (MKGSYKSRWVIVIVVVIAAIA) is a signal peptide. The segment covering 31 to 47 (DSQSAAPGATKQAQQSP) has biased composition (polar residues). Disordered regions lie at residues 31-60 (DSQS…GPLA) and 392-415 (EAQS…GARS). The span at 399-415 (SEEKATSREYAKKGARS) shows a compositional bias: basic and acidic residues.

Belongs to the membrane fusion protein (MFP) (TC 8.A.1) family. Part of a tripartite efflux system composed of MdtA, MdtB and MdtC.

The protein resides in the cell inner membrane. Functionally, the MdtABC tripartite complex confers resistance against novobiocin and deoxycholate. The protein is Multidrug resistance protein MdtA of Escherichia coli O139:H28 (strain E24377A / ETEC).